The primary structure comprises 650 residues: DNA gyrase subunit B (650 aa).

The segment covering 400–414 (RRSQEARELTRRKSP) has biased composition (basic and acidic residues). The tract at residues 400–422 (RRSQEARELTRRKSPFDSGSLPG) is disordered. A Toprim domain is found at 435 to 549 (SELYIVEGDS…QGNIYIAQPP (115 aa)). Glutamate 441, aspartate 514, and aspartate 516 together coordinate Mg(2+).

Belongs to the type II topoisomerase GyrB family. Heterotetramer, composed of two GyrA and two GyrB chains. In the heterotetramer, GyrA contains the active site tyrosine that forms a transient covalent intermediate with DNA, while GyrB binds cofactors and catalyzes ATP hydrolysis. Mg(2+) is required as a cofactor. The cofactor is Mn(2+). It depends on Ca(2+) as a cofactor.

The protein resides in the cytoplasm. It catalyses the reaction ATP-dependent breakage, passage and rejoining of double-stranded DNA.. In terms of biological role, a type II topoisomerase that negatively supercoils closed circular double-stranded (ds) DNA in an ATP-dependent manner to modulate DNA topology and maintain chromosomes in an underwound state. Negative supercoiling favors strand separation, and DNA replication, transcription, recombination and repair, all of which involve strand separation. Also able to catalyze the interconversion of other topological isomers of dsDNA rings, including catenanes and knotted rings. Type II topoisomerases break and join 2 DNA strands simultaneously in an ATP-dependent manner. This chain is DNA gyrase subunit B, found in Mycoplasma pneumoniae (strain ATCC 29342 / M129 / Subtype 1) (Mycoplasmoides pneumoniae).